A 152-amino-acid chain; its full sequence is uncharacterized protein (152 aa).

The protein belongs to the IIV-6 145L family.

This is an uncharacterized protein from Invertebrate iridescent virus 3 (IIV-3).